A 1169-amino-acid chain; its full sequence is RecBCD enzyme subunit RecB (1169 aa).

A UvrD-like helicase ATP-binding domain is found at 1–436; it reads MNKILEKIQN…IVLKINHRSS (436 aa). The segment at 1–839 is DNA-binding and helicase activity, interacts with RecC; it reads MNKILEKIQN…LLEIAKIFTI (839 aa). Residue 18–25 coordinates ATP; the sequence is ASAGTGKT. The UvrD-like helicase C-terminal domain occupies 459–746; it reads IEKIDFTNSL…ELMTIHKSKG (288 aa). The tract at residues 883-1169 is nuclease activity, interacts with RecD and RecA; the sequence is KEYTSSFSSL…ILELGIKRHL (287 aa). Mg(2+)-binding residues include His-939, Asp-1052, and Asp-1065. The active-site For nuclease activity is the Asp-1065.

The protein belongs to the helicase family. UvrD subfamily. As to quaternary structure, heterotrimer of RecB, RecC and RecD. All subunits contribute to DNA-binding. Interacts with RecA. Mg(2+) is required as a cofactor.

It carries out the reaction Exonucleolytic cleavage (in the presence of ATP) in either 5'- to 3'- or 3'- to 5'-direction to yield 5'-phosphooligonucleotides.. It catalyses the reaction Couples ATP hydrolysis with the unwinding of duplex DNA by translocating in the 3'-5' direction.. The enzyme catalyses ATP + H2O = ADP + phosphate + H(+). Its function is as follows. A helicase/nuclease that prepares dsDNA breaks (DSB) for recombinational DNA repair. Binds to DSBs and unwinds DNA via a highly rapid and processive ATP-dependent bidirectional helicase activity. Unwinds dsDNA until it encounters a Chi (crossover hotspot instigator) sequence from the 3' direction. Cuts ssDNA a few nucleotides 3' to the Chi site. The properties and activities of the enzyme are changed at Chi. The Chi-altered holoenzyme produces a long 3'-ssDNA overhang and facilitates RecA-binding to the ssDNA for homologous DNA recombination and repair. Holoenzyme degrades any linearized DNA that is unable to undergo homologous recombination. In the holoenzyme this subunit contributes ATPase, 3'-5' helicase, exonuclease activity and loads RecA onto ssDNA. In Borreliella burgdorferi (strain ATCC 35210 / DSM 4680 / CIP 102532 / B31) (Borrelia burgdorferi), this protein is RecBCD enzyme subunit RecB.